Here is a 373-residue protein sequence, read N- to C-terminus: UDP-N-acetylglucosamine--N-acetylmuramyl-(pentapeptide) pyrophosphoryl-undecaprenol N-acetylglucosamine transferase (373 aa).

Residues 10–12 (TGG), asparagine 124, arginine 166, serine 196, and glutamine 301 each bind UDP-N-acetyl-alpha-D-glucosamine.

Belongs to the glycosyltransferase 28 family. MurG subfamily.

Its subcellular location is the cell membrane. The catalysed reaction is di-trans,octa-cis-undecaprenyl diphospho-N-acetyl-alpha-D-muramoyl-L-alanyl-D-glutamyl-meso-2,6-diaminopimeloyl-D-alanyl-D-alanine + UDP-N-acetyl-alpha-D-glucosamine = di-trans,octa-cis-undecaprenyl diphospho-[N-acetyl-alpha-D-glucosaminyl-(1-&gt;4)]-N-acetyl-alpha-D-muramoyl-L-alanyl-D-glutamyl-meso-2,6-diaminopimeloyl-D-alanyl-D-alanine + UDP + H(+). It participates in cell wall biogenesis; peptidoglycan biosynthesis. Cell wall formation. Catalyzes the transfer of a GlcNAc subunit on undecaprenyl-pyrophosphoryl-MurNAc-pentapeptide (lipid intermediate I) to form undecaprenyl-pyrophosphoryl-MurNAc-(pentapeptide)GlcNAc (lipid intermediate II). In Desulforudis audaxviator (strain MP104C), this protein is UDP-N-acetylglucosamine--N-acetylmuramyl-(pentapeptide) pyrophosphoryl-undecaprenol N-acetylglucosamine transferase.